Here is a 447-residue protein sequence, read N- to C-terminus: Phosphatidylinositol N-acetylglucosaminyltransferase subunit A (447 aa).

Topologically, residues 1–387 are cytoplasmic; it reads MAEPPKLRVL…NRSLLERLMR (387 aa). A helical membrane pass occupies residues 388–408; sequence FLSCGAWAGKLFCMVMILDYL. Topologically, residues 409-447 are lumenal; the sequence is LWRLLQLLQPDEDIEEAPDICLCHHRGVEVSEGLRKKIK.

It belongs to the glycosyltransferase group 1 family. Glycosyltransferase 4 subfamily. In terms of tissue distribution, expressed in roots, stems, leaves, flowers and pollen grains.

It localises to the endoplasmic reticulum membrane. It carries out the reaction a 1,2-diacyl-sn-glycero-3-phospho-(1D-myo-inositol) + UDP-N-acetyl-alpha-D-glucosamine = a 6-(N-acetyl-alpha-D-glucosaminyl)-1-(1,2-diacyl-sn-glycero-3-phospho)-1D-myo-inositol + UDP + H(+). The protein operates within glycolipid biosynthesis; glycosylphosphatidylinositol-anchor biosynthesis. Its function is as follows. Necessary for the synthesis of N-acetylglucosaminyl-phosphatidylinositol, the very early intermediate in GPI-anchor biosynthesis. Required for pollen germination and pollen tube growth. This chain is Phosphatidylinositol N-acetylglucosaminyltransferase subunit A, found in Arabidopsis thaliana (Mouse-ear cress).